Consider the following 117-residue polypeptide: Immunoglobulin lambda variable 10-54 (117 aa).

The signal sequence occupies residues 1–21; sequence MPWALLLLTLLTHSAVSVVQA. The segment at 20 to 43 is framework-1; it reads QAGLTQPPSVSKGLRQTATLTCTG. The region spanning 22–117 is the Ig-like domain; the sequence is GLTQPPSVSK…CSALDSSLSA (96 aa). A disulfide bridge links Cys41 with Cys108. Residues 44 to 52 form a complementarity-determining-1 region; sequence NSNIVGNQG. A framework-2 region spans residues 53–69; it reads AAWLQQHQGHPPKLLSY. Residues 70–72 are complementarity-determining-2; that stretch reads RNN. The tract at residues 73-108 is framework-3; that stretch reads NRPSGISERFSASRSGNTASLTITGLQPEDEADYYC. The tract at residues 109–117 is complementarity-determining-3; sequence SALDSSLSA.

In terms of assembly, immunoglobulins are composed of two identical heavy chains and two identical light chains; disulfide-linked.

The protein resides in the secreted. It is found in the cell membrane. Its function is as follows. V region of the variable domain of immunoglobulin light chains that participates in the antigen recognition. Immunoglobulins, also known as antibodies, are membrane-bound or secreted glycoproteins produced by B lymphocytes. In the recognition phase of humoral immunity, the membrane-bound immunoglobulins serve as receptors which, upon binding of a specific antigen, trigger the clonal expansion and differentiation of B lymphocytes into immunoglobulins-secreting plasma cells. Secreted immunoglobulins mediate the effector phase of humoral immunity, which results in the elimination of bound antigens. The antigen binding site is formed by the variable domain of one heavy chain, together with that of its associated light chain. Thus, each immunoglobulin has two antigen binding sites with remarkable affinity for a particular antigen. The variable domains are assembled by a process called V-(D)-J rearrangement and can then be subjected to somatic hypermutations which, after exposure to antigen and selection, allow affinity maturation for a particular antigen. The protein is Immunoglobulin lambda variable 10-54 of Homo sapiens (Human).